The following is a 436-amino-acid chain: Prenyltransferase nscD (436 aa).

It belongs to the tryptophan dimethylallyltransferase family.

It participates in secondary metabolite biosynthesis. Its function is as follows. Prenyltransferase; part of the gene cluster that mediates the biosynthesis of neosartoricin B, a prenylated anthracenone that probably exhibits T-cell antiproliferative activity, suggestive of a physiological role as an immunosuppressive agent. The non-reducing polyketide synthase nscA probably synthesizes and cyclizes the decaketide backbone. The hydrolase nscB then mediates the product release through hydrolysis followed by spontaneous decarboxylation. The prenyltransferase nscD catalyzes the addition of the dimethylallyl group to the aromatic C5. The FAD-dependent monooxygenase nscC is then responsible for the stereospecific hydroxylation at C2. Neosartoricin B can be converted into two additional compounds neosartoricins C and D. Neosartoricin C is a spirocyclic compound that is cyclized through the attack of C3 hydroxyl on C14, followed by dehydration. On the other hand, neosartoricin D is a further cyclized compound in which attack of C2 on C14 in neosartoricin C results in the formation of the acetal-containing dioxabicyclo-octanone ring. Both of these compounds are novel and possibly represent related metabolites of the gene cluster. The protein is Prenyltransferase nscD of Trichophyton tonsurans (strain CBS 112818) (Scalp ringworm fungus).